We begin with the raw amino-acid sequence, 688 residues long: Translation initiation factor IF-2 (688 aa).

2 stretches are compositionally biased toward basic and acidic residues: residues 53-62 (GKEKSEKTKE) and 86-95 (KRDDKNEKVN). Positions 53-100 (GKEKSEKTKEEDDEIETTAKNPIKESMNNKKSNKRDDKNEKVNTENAE) are disordered. The 168-residue stretch at 187–354 (KRSPIITVMG…MILLSSEILE (168 aa)) folds into the tr-type G domain. Residues 196–203 (GHVDHGKT) form a G1 region. 196–203 (GHVDHGKT) contacts GTP. Positions 221-225 (GITQH) are G2. The tract at residues 242-245 (DTPG) is G3. GTP contacts are provided by residues 242-246 (DTPGH) and 296-299 (NKID). A G4 region spans residues 296–299 (NKID). Positions 332 to 334 (SAH) are G5.

Belongs to the TRAFAC class translation factor GTPase superfamily. Classic translation factor GTPase family. IF-2 subfamily.

The protein resides in the cytoplasm. Functionally, one of the essential components for the initiation of protein synthesis. Protects formylmethionyl-tRNA from spontaneous hydrolysis and promotes its binding to the 30S ribosomal subunits. Also involved in the hydrolysis of GTP during the formation of the 70S ribosomal complex. This chain is Translation initiation factor IF-2, found in Clostridium botulinum (strain ATCC 19397 / Type A).